The following is a 175-amino-acid chain: Large ribosomal subunit protein bL17 (175 aa).

A disordered region spans residues 127-175 (GEAEAATKRAVKEDALKKDEAPAAESVEDAKPAEDAPAAEAADDKGKDA). Residues 131–147 (AATKRAVKEDALKKDEA) show a composition bias toward basic and acidic residues.

It belongs to the bacterial ribosomal protein bL17 family. In terms of assembly, part of the 50S ribosomal subunit. Contacts protein L32.

The chain is Large ribosomal subunit protein bL17 from Streptomyces griseus subsp. griseus (strain JCM 4626 / CBS 651.72 / NBRC 13350 / KCC S-0626 / ISP 5235).